The primary structure comprises 205 residues: Thiamine-phosphate synthase (205 aa).

Residues 34–38 and N66 each bind 4-amino-2-methyl-5-(diphosphooxymethyl)pyrimidine; that span reads QLRCK. Mg(2+)-binding residues include D67 and D86. S105 lines the 4-amino-2-methyl-5-(diphosphooxymethyl)pyrimidine pocket. 131–133 lines the 2-[(2R,5Z)-2-carboxy-4-methylthiazol-5(2H)-ylidene]ethyl phosphate pocket; it reads TTT. Position 134 (K134) interacts with 4-amino-2-methyl-5-(diphosphooxymethyl)pyrimidine. G163 is a binding site for 2-[(2R,5Z)-2-carboxy-4-methylthiazol-5(2H)-ylidene]ethyl phosphate.

It belongs to the thiamine-phosphate synthase family. Requires Mg(2+) as cofactor.

The catalysed reaction is 2-[(2R,5Z)-2-carboxy-4-methylthiazol-5(2H)-ylidene]ethyl phosphate + 4-amino-2-methyl-5-(diphosphooxymethyl)pyrimidine + 2 H(+) = thiamine phosphate + CO2 + diphosphate. It catalyses the reaction 2-(2-carboxy-4-methylthiazol-5-yl)ethyl phosphate + 4-amino-2-methyl-5-(diphosphooxymethyl)pyrimidine + 2 H(+) = thiamine phosphate + CO2 + diphosphate. It carries out the reaction 4-methyl-5-(2-phosphooxyethyl)-thiazole + 4-amino-2-methyl-5-(diphosphooxymethyl)pyrimidine + H(+) = thiamine phosphate + diphosphate. The protein operates within cofactor biosynthesis; thiamine diphosphate biosynthesis; thiamine phosphate from 4-amino-2-methyl-5-diphosphomethylpyrimidine and 4-methyl-5-(2-phosphoethyl)-thiazole: step 1/1. Its function is as follows. Condenses 4-methyl-5-(beta-hydroxyethyl)thiazole monophosphate (THZ-P) and 2-methyl-4-amino-5-hydroxymethyl pyrimidine pyrophosphate (HMP-PP) to form thiamine monophosphate (TMP). The polypeptide is Thiamine-phosphate synthase (Neisseria meningitidis serogroup B (strain ATCC BAA-335 / MC58)).